A 506-amino-acid polypeptide reads, in one-letter code: Xaa-Pro aminopeptidase 3 (506 aa).

Residues 1 to 31 (MPSLLSTPKLAPVLARLRGLSGCMSCLQRRY) constitute a mitochondrion transit peptide. Residues 54–79 (HPHLLRPGEVTPGLSQVEYALRRHKL) are interaction with TNFRSF1B. The substrate site is built by tyrosine 300, aspartate 331, aspartate 342, histidine 423, histidine 430, glutamate 450, and glutamate 474. Residues aspartate 331, aspartate 342, and histidine 423 each coordinate Mn(2+). Mn(2+) contacts are provided by glutamate 450 and glutamate 474.

The protein belongs to the peptidase M24B family. Homodimer. Interacts with TNFRSF1B/TNFR2 (activated) and TRAF2. The cofactor is Mn(2+). As to expression, expressed in brain, kidney, heart, liver, skeletal muscle and testis.

The protein localises to the mitochondrion. The protein resides in the cytoplasm. It carries out the reaction Release of any N-terminal amino acid, including proline, that is linked to proline, even from a dipeptide or tripeptide.. Functionally, catalyzes the removal of a penultimate prolyl residue from the N-termini of peptides, such as Leu-Pro-Ala. Also shows low activity towards peptides with Ala or Ser at the P1 position. Promotes TNFRSF1B-mediated phosphorylation of MAPK8/JNK1 and MAPK9/JNK2, suggesting a function as an adapter protein for TNFRSF1B; the effect is independent of XPNPEP3 peptidase activity. May inhibit apoptotic cell death induced via TNF-TNFRSF1B signaling. The polypeptide is Xaa-Pro aminopeptidase 3 (Xpnpep3) (Mus musculus (Mouse)).